A 230-amino-acid polypeptide reads, in one-letter code: 5'-methylthioadenosine/S-adenosylhomocysteine nucleosidase (230 aa).

E12 serves as the catalytic Proton acceptor. Residues G78, I153, and 174-175 (ME) each bind substrate. Catalysis depends on D198, which acts as the Proton donor.

Belongs to the PNP/UDP phosphorylase family. MtnN subfamily.

The enzyme catalyses S-adenosyl-L-homocysteine + H2O = S-(5-deoxy-D-ribos-5-yl)-L-homocysteine + adenine. It carries out the reaction S-methyl-5'-thioadenosine + H2O = 5-(methylsulfanyl)-D-ribose + adenine. The catalysed reaction is 5'-deoxyadenosine + H2O = 5-deoxy-D-ribose + adenine. The protein operates within amino-acid biosynthesis; L-methionine biosynthesis via salvage pathway; S-methyl-5-thio-alpha-D-ribose 1-phosphate from S-methyl-5'-thioadenosine (hydrolase route): step 1/2. Its function is as follows. Catalyzes the irreversible cleavage of the glycosidic bond in both 5'-methylthioadenosine (MTA) and S-adenosylhomocysteine (SAH/AdoHcy) to adenine and the corresponding thioribose, 5'-methylthioribose and S-ribosylhomocysteine, respectively. Also cleaves 5'-deoxyadenosine, a toxic by-product of radical S-adenosylmethionine (SAM) enzymes, into 5-deoxyribose and adenine. The polypeptide is 5'-methylthioadenosine/S-adenosylhomocysteine nucleosidase (Shewanella frigidimarina (strain NCIMB 400)).